The following is a 223-amino-acid chain: uncharacterized protein (223 aa).

To M.jannaschii MJ0575.

This is an uncharacterized protein from Methanocaldococcus jannaschii (strain ATCC 43067 / DSM 2661 / JAL-1 / JCM 10045 / NBRC 100440) (Methanococcus jannaschii).